A 588-amino-acid polypeptide reads, in one-letter code: L-fucose isomerase (588 aa).

Catalysis depends on proton acceptor residues Glu335 and Asp359. 3 residues coordinate Mn(2+): Glu335, Asp359, and His525.

It belongs to the L-fucose isomerase family. It depends on Mn(2+) as a cofactor.

The protein localises to the cytoplasm. It catalyses the reaction L-fucose = L-fuculose. It participates in carbohydrate degradation; L-fucose degradation; L-lactaldehyde and glycerone phosphate from L-fucose: step 1/3. In terms of biological role, converts the aldose L-fucose into the corresponding ketose L-fuculose. This chain is L-fucose isomerase, found in Streptococcus pneumoniae serotype 4 (strain ATCC BAA-334 / TIGR4).